Consider the following 99-residue polypeptide: Small ribosomal subunit protein bS20 (99 aa).

Belongs to the bacterial ribosomal protein bS20 family.

Functionally, binds directly to 16S ribosomal RNA. The protein is Small ribosomal subunit protein bS20 of Synechococcus sp. (strain CC9311).